Reading from the N-terminus, the 123-residue chain is uncharacterized protein (123 aa).

The next 2 membrane-spanning stretches (helical) occupy residues 53–73 and 75–95; these read VWFLFLFFIASHINILFFFFL and VLWFLWCYLCSGLFLFDVFSH.

Its subcellular location is the membrane. This is an uncharacterized protein from Saccharomyces cerevisiae (strain ATCC 204508 / S288c) (Baker's yeast).